Reading from the N-terminus, the 428-residue chain is Kynureninase (428 aa).

Residues Thr104, Thr105, 132 to 135 (FPSD), Asp213, His216, and Tyr238 each bind pyridoxal 5'-phosphate. An N6-(pyridoxal phosphate)lysine modification is found at Lys239. Pyridoxal 5'-phosphate contacts are provided by Trp267 and Thr295.

It belongs to the kynureninase family. As to quaternary structure, homodimer. Pyridoxal 5'-phosphate is required as a cofactor.

The catalysed reaction is L-kynurenine + H2O = anthranilate + L-alanine + H(+). It catalyses the reaction 3-hydroxy-L-kynurenine + H2O = 3-hydroxyanthranilate + L-alanine + H(+). It participates in amino-acid degradation; L-kynurenine degradation; L-alanine and anthranilate from L-kynurenine: step 1/1. Its pathway is cofactor biosynthesis; NAD(+) biosynthesis; quinolinate from L-kynurenine: step 2/3. Functionally, catalyzes the cleavage of L-kynurenine (L-Kyn) and L-3-hydroxykynurenine (L-3OHKyn) into anthranilic acid (AA) and 3-hydroxyanthranilic acid (3-OHAA), respectively. The polypeptide is Kynureninase (Bacillus thuringiensis subsp. konkukian (strain 97-27)).